Here is an 887-residue protein sequence, read N- to C-terminus: 3-hydroxy-3-methylglutaryl-coenzyme A reductase (887 aa).

Residues 1–9 lie on the Cytoplasmic side of the membrane; that stretch reads MLSRLFRMH. A helical membrane pass occupies residues 10-39; the sequence is GLFVASHPWEVIVGTVTLTICMMSMNMFTG. Residues 40–56 are Lumenal-facing; the sequence is NNKICGWNYECPKFEED. A helical membrane pass occupies residues 57–78; that stretch reads VLSSDIIILTITRCIAILYIYF. The 158-residue stretch at 61-218 folds into the SSD domain; the sequence is DIIILTITRC…MTFFPACVSL (158 aa). Positions 75 to 78 match the INSIG-binding motif motif; the sequence is YIYF. Residues 79-89 lie on the Cytoplasmic side of the membrane; that stretch reads QFQNLRQLGSK. Lys89 is covalently cross-linked (Glycyl lysine isopeptide (Lys-Gly) (interchain with G-Cter in ubiquitin)). The helical transmembrane segment at 90–114 threads the bilayer; sequence YILGIAGLFTIFSSFVFSTVVIHFL. Over 115–123 the chain is Lumenal; the sequence is DKELTGLNE. Residues 124-149 form a helical membrane-spanning segment; the sequence is ALPFFLLLIDLSRASALAKFALSSNS. Residues 150–159 are Cytoplasmic-facing; sequence QDEVRENIAR. Residues 160–187 traverse the membrane as a helical segment; the sequence is GMAILGPTFTLDALVECLVIGVGTMSGV. Residues 188–191 lie on the Lumenal side of the membrane; sequence RQLE. Residues 192–220 traverse the membrane as a helical segment; sequence IMCCFGCMSVLANYFVFMTFFPACVSLVL. Residues 221–248 lie on the Cytoplasmic side of the membrane; that stretch reads ELSRESREGRPIWQLSHFARVLEEEENK. Lys248 is covalently cross-linked (Glycyl lysine isopeptide (Lys-Gly) (interchain with G-Cter in ubiquitin)). Residues 249–275 form a helical membrane-spanning segment; sequence PNPVTQRVKMIMSLGLVLVHAHSRWIA. The Lumenal segment spans residues 276-314; the sequence is DPSPQNSTAEQAKVSLGLDEDVSKRIEPSVSLWQFYLSK. Residue Asn281 is glycosylated (N-linked (GlcNAc...) asparagine). A helical transmembrane segment spans residues 315–339; that stretch reads MISMDIEQVITLSLAFLLAVKYIFF. At 340-887 the chain is on the cytoplasmic side; it reads EQAETESTLS…LQGTCTKKAA (548 aa). Residues Glu558, Lys690, and Asp766 each act as charge relay system in the active site. His865 (proton donor) is an active-site residue. Position 871 is a phosphoserine (Ser871).

This sequence belongs to the HMG-CoA reductase family. In terms of assembly, homotetramer. Homodimer. Interacts (via its SSD) with INSIG1; the interaction, accelerated by sterols, leads to the recruitment of HMGCR to AMFR/gp78 for its ubiquitination by the sterol-mediated ERAD pathway. Interacts with UBIAD1. Undergoes sterol-mediated ubiquitination and ER-associated degradation (ERAD). Accumulation of sterols in the endoplasmic reticulum (ER) membrane, triggers binding of the reductase to the ER membrane protein INSIG1 or INSIG2. The INSIG1 binding leads to the recruitment of the ubiquitin ligase, AMFR/gp78, RNF139 or RNF145, initiating ubiquitination of the reductase. The ubiquitinated reductase is then extracted from the ER membrane and delivered to cytosolic 26S proteosomes by a mechanism probably mediated by the ATPase Valosin-containing protein VCP/p97. The INSIG2-binding leads to the recruitment of the ubiquitin ligase RNF139, initiating ubiquitination of the reductase. Lys-248 is the main site of ubiquitination. Ubiquitination is enhanced by the presence of a geranylgeranylated protein. Post-translationally, N-glycosylated. Deglycosylated by NGLY1 on release from the endoplasmic reticulum (ER) in a sterol-mediated manner. In terms of processing, phosphorylated. Phosphorylation at Ser-871 reduces the catalytic activity.

The protein resides in the endoplasmic reticulum membrane. It localises to the peroxisome membrane. It carries out the reaction (R)-mevalonate + 2 NADP(+) + CoA = (3S)-3-hydroxy-3-methylglutaryl-CoA + 2 NADPH + 2 H(+). It participates in metabolic intermediate biosynthesis; (R)-mevalonate biosynthesis; (R)-mevalonate from acetyl-CoA: step 3/3. Its activity is regulated as follows. Regulated by a negative feedback mechanism through sterols and non-sterol metabolites derived from mevalonate. Phosphorylation at Ser-871 down-regulates the catalytic activity. Its function is as follows. Catalyzes the conversion of (3S)-hydroxy-3-methylglutaryl-CoA (HMG-CoA) to mevalonic acid, the rate-limiting step in the synthesis of cholesterol and other isoprenoids, thus plays a critical role in cellular cholesterol homeostasis. This Mus musculus (Mouse) protein is 3-hydroxy-3-methylglutaryl-coenzyme A reductase (Hmgcr).